The sequence spans 229 residues: ATP-dependent Clp protease proteolytic subunit (229 aa).

Ser101 acts as the Nucleophile in catalysis. His126 is a catalytic residue.

It belongs to the peptidase S14 family. As to quaternary structure, component of the chloroplastic Clp protease core complex.

The protein localises to the plastid. It localises to the chloroplast stroma. It catalyses the reaction Hydrolysis of proteins to small peptides in the presence of ATP and magnesium. alpha-casein is the usual test substrate. In the absence of ATP, only oligopeptides shorter than five residues are hydrolyzed (such as succinyl-Leu-Tyr-|-NHMec, and Leu-Tyr-Leu-|-Tyr-Trp, in which cleavage of the -Tyr-|-Leu- and -Tyr-|-Trp bonds also occurs).. Functionally, cleaves peptides in various proteins in a process that requires ATP hydrolysis. Has a chymotrypsin-like activity. Plays a major role in the degradation of misfolded proteins. This is ATP-dependent Clp protease proteolytic subunit from Mesostigma viride (Green alga).